The chain runs to 209 residues: Uracil phosphoribosyltransferase (209 aa).

5-phospho-alpha-D-ribose 1-diphosphate-binding positions include R79, R104, and 131–139 (DPMLATGGS). Residues I194 and 199-201 (GDA) contribute to the uracil site. A 5-phospho-alpha-D-ribose 1-diphosphate-binding site is contributed by D200.

The protein belongs to the UPRTase family. Homodimer. It depends on Mg(2+) as a cofactor.

It carries out the reaction UMP + diphosphate = 5-phospho-alpha-D-ribose 1-diphosphate + uracil. The protein operates within pyrimidine metabolism; UMP biosynthesis via salvage pathway; UMP from uracil: step 1/1. With respect to regulation, allosterically activated by GTP. Functionally, catalyzes the conversion of uracil and 5-phospho-alpha-D-ribose 1-diphosphate (PRPP) to UMP and diphosphate. The sequence is that of Uracil phosphoribosyltransferase from Bacillus caldolyticus.